The primary structure comprises 326 residues: Phospho-N-acetylmuramoyl-pentapeptide-transferase (326 aa).

Helical transmembrane passes span 3–23 (ISIS…PAFI), 51–71 (TMGG…VALF), 79–99 (VGMI…DDFL), 115–135 (LALQ…GGDM), 138–158 (IFGY…FWLV), 169–189 (GIDG…GVIA), 195–215 (MDIL…FVFN), 221–243 (VFMG…MALH), and 304–324 (VDFF…AILY).

This sequence belongs to the glycosyltransferase 4 family. MraY subfamily. It depends on Mg(2+) as a cofactor.

The protein resides in the cell membrane. It catalyses the reaction UDP-N-acetyl-alpha-D-muramoyl-L-alanyl-gamma-D-glutamyl-L-lysyl-D-alanyl-D-alanine + di-trans,octa-cis-undecaprenyl phosphate = Mur2Ac(oyl-L-Ala-gamma-D-Glu-L-Lys-D-Ala-D-Ala)-di-trans,octa-cis-undecaprenyl diphosphate + UMP. The protein operates within cell wall biogenesis; peptidoglycan biosynthesis. In terms of biological role, catalyzes the initial step of the lipid cycle reactions in the biosynthesis of the cell wall peptidoglycan: transfers peptidoglycan precursor phospho-MurNAc-pentapeptide from UDP-MurNAc-pentapeptide onto the lipid carrier undecaprenyl phosphate, yielding undecaprenyl-pyrophosphoryl-MurNAc-pentapeptide, known as lipid I. This is Phospho-N-acetylmuramoyl-pentapeptide-transferase from Streptococcus pneumoniae (strain Hungary19A-6).